Reading from the N-terminus, the 636-residue chain is Threonine--tRNA ligase (636 aa).

Positions 1–61 constitute a TGS domain; that stretch reads MINITLPDDS…RNDCAVRLIT (61 aa). The segment at 238–528 is catalytic; that stretch reads DHRKIGTRMG…LVEHFAGKFP (291 aa). 3 residues coordinate Zn(2+): C329, H380, and H505.

This sequence belongs to the class-II aminoacyl-tRNA synthetase family. In terms of assembly, homodimer. Zn(2+) is required as a cofactor.

The protein localises to the cytoplasm. It carries out the reaction tRNA(Thr) + L-threonine + ATP = L-threonyl-tRNA(Thr) + AMP + diphosphate + H(+). Catalyzes the attachment of threonine to tRNA(Thr) in a two-step reaction: L-threonine is first activated by ATP to form Thr-AMP and then transferred to the acceptor end of tRNA(Thr). Also edits incorrectly charged L-seryl-tRNA(Thr). The polypeptide is Threonine--tRNA ligase (Desulforapulum autotrophicum (strain ATCC 43914 / DSM 3382 / VKM B-1955 / HRM2) (Desulfobacterium autotrophicum)).